A 116-amino-acid chain; its full sequence is Ribosome-binding factor A (116 aa).

Belongs to the RbfA family. Monomer. Binds 30S ribosomal subunits, but not 50S ribosomal subunits or 70S ribosomes.

It localises to the cytoplasm. In terms of biological role, one of several proteins that assist in the late maturation steps of the functional core of the 30S ribosomal subunit. Associates with free 30S ribosomal subunits (but not with 30S subunits that are part of 70S ribosomes or polysomes). Required for efficient processing of 16S rRNA. May interact with the 5'-terminal helix region of 16S rRNA. This Streptococcus uberis (strain ATCC BAA-854 / 0140J) protein is Ribosome-binding factor A.